The sequence spans 106 residues: MFSFFTYFLLSALLLSASCRQPSMDTSKADRILREIEMETELENQLSRARRVPAGEVRACGRRLLLFVWSTCGEPCTPQEDMDIATVCCTTQCTPSYIKQACCPEK.

An N-terminal signal peptide occupies residues 1–19; the sequence is MFSFFTYFLLSALLLSASC. The propeptide at 20–51 is removed; by convertase egl-3; that stretch reads RQPSMDTSKADRILREIEMETELENQLSRARR. 4 cysteine pairs are disulfide-bonded: C60-C89, C72-C102, C76-C103, and C88-C93.

This sequence belongs to the insulin family. As to expression, expressed by ASI and ASJ sensory neurons and weakly by ventral cord motor neurons.

Its subcellular location is the secreted. Its function is as follows. Probable insulin-like peptide which negatively regulates synapse development at the neuromuscular junctions. Probably acts as a daf-2/InsR agonist ligand to prevent dauer formation under optimal environmental conditions. This chain is Probable insulin-like peptide beta-type 1 (ins-4), found in Caenorhabditis elegans.